Here is a 501-residue protein sequence, read N- to C-terminus: Splicing factor ESS-2 homolog (501 aa).

Low complexity-rich tracts occupy residues 1 to 18 (MSAT…GTPG) and 105 to 115 (ISGTGRSTSRR). 2 disordered regions span residues 1 to 20 (MSAT…PGSL) and 105 to 163 (ISGT…GRDT). Residues 126–151 (TPVSQAKCSNTPLPNSRATDTPFSTD) show a composition bias toward polar residues. Basic and acidic residues predominate over residues 152-163 (GSEKSDAEGRDT). Ser409 and Ser411 each carry phosphoserine. The tract at residues 425–471 (RGTPRLRHTPSPMSGRKRKVTPGVVRSTNTPILGEPKPKQQAKISTP) is disordered.

The protein belongs to the ESS2 family.

The protein localises to the nucleus. This chain is Splicing factor ESS-2 homolog (Es2), found in Drosophila melanogaster (Fruit fly).